Reading from the N-terminus, the 238-residue chain is 1-(5-phosphoribosyl)-5-[(5-phosphoribosylamino)methylideneamino] imidazole-4-carboxamide isomerase (238 aa).

Asp-8 functions as the Proton acceptor in the catalytic mechanism. Residue Asp-129 is the Proton donor of the active site.

The protein belongs to the HisA/HisF family.

The protein resides in the cytoplasm. The enzyme catalyses 1-(5-phospho-beta-D-ribosyl)-5-[(5-phospho-beta-D-ribosylamino)methylideneamino]imidazole-4-carboxamide = 5-[(5-phospho-1-deoxy-D-ribulos-1-ylimino)methylamino]-1-(5-phospho-beta-D-ribosyl)imidazole-4-carboxamide. Its pathway is amino-acid biosynthesis; L-histidine biosynthesis; L-histidine from 5-phospho-alpha-D-ribose 1-diphosphate: step 4/9. The chain is 1-(5-phosphoribosyl)-5-[(5-phosphoribosylamino)methylideneamino] imidazole-4-carboxamide isomerase from Myxococcus xanthus (strain DK1622).